A 389-amino-acid polypeptide reads, in one-letter code: uncharacterized protein (389 aa).

Disordered regions lie at residues 119 to 156, 180 to 233, 294 to 321, and 362 to 389; these read SSLF…GENQ, PTSK…SSMG, SIPS…TSRT, and PEDM…EIKV. Residues 137–155 are compositionally biased toward polar residues; that stretch reads SPSTINIEKNRHSSNSGEN. The span at 190–204 shows a compositional bias: acidic residues; that stretch reads DDGDEEDDTDDEGEA.

This is an uncharacterized protein from Caenorhabditis elegans.